We begin with the raw amino-acid sequence, 325 residues long: Probable isoaspartyl peptidase/L-asparaginase 2 (325 aa).

Catalysis depends on Thr-195, which acts as the Nucleophile. Residues 223-226 (RIGD) and 245-248 (TGEG) contribute to the substrate site.

This sequence belongs to the Ntn-hydrolase family. Heterotetramer of two alpha and two beta chains arranged as a dimer of alpha/beta heterodimers. In terms of processing, cleaved into an alpha and beta chain by autocatalysis; this activates the enzyme. The N-terminal residue of the beta subunit is responsible for the nucleophile hydrolase activity.

It carries out the reaction Cleavage of a beta-linked Asp residue from the N-terminus of a polypeptide.. Its function is as follows. Acts in asparagine catabolism and also in the final steps of protein degradation via hydrolysis of a range of isoaspartyl dipeptides. The protein is Probable isoaspartyl peptidase/L-asparaginase 2 of Arabidopsis thaliana (Mouse-ear cress).